The following is a 226-amino-acid chain: Lipoprotein-releasing system ATP-binding protein LolD 1 (226 aa).

Positions 5 to 225 constitute an ABC transporter domain; that stretch reads LKLDGIRKSY…IVRVVDGKIA (221 aa). 42 to 49 provides a ligand contact to ATP; sequence GPSGSGKS.

It belongs to the ABC transporter superfamily. Lipoprotein translocase (TC 3.A.1.125) family. As to quaternary structure, the complex is composed of two ATP-binding proteins (LolD) and two transmembrane proteins (LolC and LolE).

The protein localises to the cell inner membrane. Its function is as follows. Part of the ABC transporter complex LolCDE involved in the translocation of mature outer membrane-directed lipoproteins, from the inner membrane to the periplasmic chaperone, LolA. Responsible for the formation of the LolA-lipoprotein complex in an ATP-dependent manner. The protein is Lipoprotein-releasing system ATP-binding protein LolD 1 of Rhodopseudomonas palustris (strain ATCC BAA-98 / CGA009).